The following is a 227-amino-acid chain: ATP-dependent Clp protease proteolytic subunit (227 aa).

Serine 123 functions as the Nucleophile in the catalytic mechanism. Histidine 148 is a catalytic residue.

The protein belongs to the peptidase S14 family. As to quaternary structure, fourteen ClpP subunits assemble into 2 heptameric rings which stack back to back to give a disk-like structure with a central cavity, resembling the structure of eukaryotic proteasomes.

It localises to the cytoplasm. It carries out the reaction Hydrolysis of proteins to small peptides in the presence of ATP and magnesium. alpha-casein is the usual test substrate. In the absence of ATP, only oligopeptides shorter than five residues are hydrolyzed (such as succinyl-Leu-Tyr-|-NHMec, and Leu-Tyr-Leu-|-Tyr-Trp, in which cleavage of the -Tyr-|-Leu- and -Tyr-|-Trp bonds also occurs).. In terms of biological role, cleaves peptides in various proteins in a process that requires ATP hydrolysis. Has a chymotrypsin-like activity. Plays a major role in the degradation of misfolded proteins. The protein is ATP-dependent Clp protease proteolytic subunit of Chlorobium phaeobacteroides (strain DSM 266 / SMG 266 / 2430).